A 722-amino-acid chain; its full sequence is Serine/threonine-protein kinase MARK2 (722 aa).

The segment at 1–46 (MSSARTPLPTLNERDTEQPTLGHLDSKPSSKSNMLRGRNSATSADE) is disordered. Polar residues predominate over residues 27–45 (KPSSKSNMLRGRNSATSAD). The residue at position 40 (Ser-40) is a Phosphoserine. Residues 53-304 (YRLLKTIGKG…LEQIMKDRWM (252 aa)) form the Protein kinase domain. Thr-58 carries the phosphothreonine; by autocatalysis modification. ATP-binding positions include 59 to 67 (IGKGNFAKV) and Lys-82. A phosphoserine; by CaMK1 mark is found at Ser-91, Ser-92, and Ser-93. Asp-175 acts as the Proton acceptor in catalysis. Thr-208 is subject to Phosphothreonine; by LKB1 and TAOK1. Ser-212 bears the Phosphoserine; by GSK3-beta mark. Ser-274 carries the phosphoserine; by autocatalysis modification. Thr-275 carries the post-translational modification Phosphothreonine; by autocatalysis. Phosphothreonine; by CaMK1 is present on Thr-294. The UBA domain occupies 323 to 362 (YKDPRRTELMVSMGYTREEIQDSLVGQRYNEVMATYLLLG). The tract at residues 373 to 576 (ITLKPRPSAD…SQGRRGASGS (204 aa)) is disordered. A phosphoserine mark is found at Ser-408 and Ser-409. The segment covering 417–431 (PTSNSYSKKTQSNNA) has biased composition (polar residues). Positions 432-442 (ENKRPEEETGR) are enriched in basic and acidic residues. Ser-453 bears the Phosphoserine mark. At Thr-464 the chain carries Phosphothreonine. Positions 464-483 (TPTPSTNSVLSTSTNRSRNS) are enriched in polar residues. A phosphoserine mark is found at Ser-483 and Ser-490. Positions 492–505 (GQASIQNGKDSTAP) are enriched in polar residues. Positions 511–524 (ASPSAHNISSSSGA) are enriched in low complexity. 3 positions are modified to phosphoserine: Ser-512, Ser-514, and Ser-535. Thr-539 is subject to Phosphothreonine; by PKC/PRKCZ. Ser-562 and Ser-656 each carry phosphoserine. The 50-residue stretch at 673–722 (TPGHENFVQWEMEVCKLPRLSLNGVRFKRISGTSMAFKNIASKIANELKL) folds into the KA1 domain.

Belongs to the protein kinase superfamily. CAMK Ser/Thr protein kinase family. SNF1 subfamily. Homodimer. Interacts (when phosphorylated at Thr-539) with YWHAZ. Interacts with MTCL1; the interaction is direct and increases MARK2 microtubule-binding ability. Interacts with PAK5; leading to inhibit the protein kinase activity. Interacts with MAPT/TAU. Interacts with YWHAB, YWHAG and YWHAQ. Mg(2+) is required as a cofactor. Post-translationally, autophosphorylated. Phosphorylated at Thr-208 by STK11/LKB1 in complex with STE20-related adapter-alpha (STRADA) pseudo kinase and CAB39. Phosphorylation at Thr-208 by TAOK1 activates the kinase activity, leading to phosphorylation and detachment of MAPT/TAU from microtubules. Phosphorylation at Ser-212 by GSK3-beta (GSK3B) inhibits the kinase activity. Phosphorylation by CaMK1 promotes activity and is required to promote neurite outgrowth. Phosphorylation at Thr-539 by PRKCZ/aPKC in polarized epithelial cells inhibits the kinase activity and promotes binding to 14-3-3 protein YWHAZ, leading to relocation from cell membrane to cytoplasm.

It is found in the cell membrane. The protein resides in the lateral cell membrane. The protein localises to the cytoplasm. Its subcellular location is the cytoskeleton. It localises to the cell projection. It is found in the dendrite. The catalysed reaction is L-seryl-[protein] + ATP = O-phospho-L-seryl-[protein] + ADP + H(+). It carries out the reaction L-threonyl-[protein] + ATP = O-phospho-L-threonyl-[protein] + ADP + H(+). It catalyses the reaction L-seryl-[tau protein] + ATP = O-phospho-L-seryl-[tau protein] + ADP + H(+). The enzyme catalyses L-threonyl-[tau protein] + ATP = O-phospho-L-threonyl-[tau protein] + ADP + H(+). With respect to regulation, inhibited by hymenialdisine. Activated by phosphorylation on Thr-208 by STK11/LKB1 and TAOK1. Inhibited by phosphorylation at Ser-212 or Thr-539. Inhibited by PAK5; inhibition is independent of the kinase activity of PAK5. Serine/threonine-protein kinase. Involved in cell polarity and microtubule dynamics regulation. Phosphorylates CRTC2/TORC2, DCX, HDAC7, KIF13B, MAP2, MAP4 and RAB11FIP2. Phosphorylates the microtubule-associated protein MAPT/TAU. Plays a key role in cell polarity by phosphorylating the microtubule-associated proteins MAP2, MAP4 and MAPT/TAU at KXGS motifs, causing detachment from microtubules, and their disassembly. Regulates epithelial cell polarity by phosphorylating RAB11FIP2. Involved in the regulation of neuronal migration through its dual activities in regulating cellular polarity and microtubule dynamics, possibly by phosphorylating and regulating DCX. Regulates axogenesis by phosphorylating KIF13B, promoting interaction between KIF13B and 14-3-3 and inhibiting microtubule-dependent accumulation of KIF13B. Also required for neurite outgrowth and establishment of neuronal polarity. Regulates localization and activity of some histone deacetylases by mediating phosphorylation of HDAC7, promoting subsequent interaction between HDAC7 and 14-3-3 and export from the nucleus. Also acts as a positive regulator of the Wnt signaling pathway, probably by mediating phosphorylation of dishevelled proteins (DVL1, DVL2 and/or DVL3). Modulates the developmental decision to build a columnar versus a hepatic epithelial cell apparently by promoting a switch from a direct to a transcytotic mode of apical protein delivery. Essential for the asymmetric development of membrane domains of polarized epithelial cells. This Rattus norvegicus (Rat) protein is Serine/threonine-protein kinase MARK2.